The sequence spans 413 residues: 2,3-bisphosphoglycerate-independent phosphoglycerate mutase (413 aa).

This sequence belongs to the BPG-independent phosphoglycerate mutase family. A-PGAM subfamily.

The catalysed reaction is (2R)-2-phosphoglycerate = (2R)-3-phosphoglycerate. It participates in carbohydrate degradation; glycolysis; pyruvate from D-glyceraldehyde 3-phosphate: step 3/5. In terms of biological role, catalyzes the interconversion of 2-phosphoglycerate and 3-phosphoglycerate. In Sulfurisphaera tokodaii (strain DSM 16993 / JCM 10545 / NBRC 100140 / 7) (Sulfolobus tokodaii), this protein is 2,3-bisphosphoglycerate-independent phosphoglycerate mutase.